Here is a 636-residue protein sequence, read N- to C-terminus: ATP-dependent DNA helicase YoaA (636 aa).

A Helicase ATP-binding domain is found at 10–272 (QLAKAIPGFK…KDTQQLQKCA (263 aa)). 45–52 (AGTGTGKT) contributes to the ATP binding site. The [4Fe-4S] cluster site is built by cysteine 108, cysteine 168, cysteine 173, and cysteine 179. Residues 225–228 (DEAH) carry the DEAH box motif.

This sequence belongs to the helicase family. DinG subfamily. Interacts with the DNA polymerase III subunit Chi (holC), probably as a 1:1 complex. It depends on [4Fe-4S] cluster as a cofactor. Requires Mg(2+) as cofactor.

It carries out the reaction Couples ATP hydrolysis with the unwinding of duplex DNA at the replication fork by translocating in the 5'-3' direction. This creates two antiparallel DNA single strands (ssDNA). The leading ssDNA polymer is the template for DNA polymerase III holoenzyme which synthesizes a continuous strand.. It catalyses the reaction ATP + H2O = ADP + phosphate + H(+). With respect to regulation, non-hydrolyzable ATP analogs ATP-gamma-S and adenylyl-imidodiphosphate (AMP-PNP) inhibit helicase activity. DNA-dependent ATPase and 5'-3' DNA helicase. Has single-stranded (ss)DNA-dependent ATPase activity and 5'-3' helicase activity on forked DNA; both activities were measure in a YoaA:HolC (chi) complex. Requires a 20-35 nucleotide (nt) 5'-ssDNA tail; dsDNA with a 20 nt gap is also unwound. Unwinds damaged 3' nascent ends (such as those terminated by 3' azidothymidine (AZT), 3' dideoxy-C or an abasic site on the translocating strand), to promote repair and AZT excision. Without HolC the protein has much lower activity which could be due to YoaA instability or helicase stimulation by HolC. Genetically identified as involved in the repair of replication forks and tolerance of the chain-terminating nucleoside analog AZT. May act in proofreading during nucleotide misincorporation, it appears to aid in the removal of potential A-to-T transversion mutations in ndk mutants. This is ATP-dependent DNA helicase YoaA (yoaA) from Escherichia coli (strain K12).